The sequence spans 647 residues: Threonine--tRNA ligase (647 aa).

Residues 1–61 (MIKITFPDGA…EEDGSIEIVT (61 aa)) enclose the TGS domain. The interval 240-538 (DHRKLGKELD…LIETYKGAFP (299 aa)) is catalytic. Residues Cys-334, His-385, and His-515 each contribute to the Zn(2+) site.

Belongs to the class-II aminoacyl-tRNA synthetase family. As to quaternary structure, homodimer. Requires Zn(2+) as cofactor.

It localises to the cytoplasm. It carries out the reaction tRNA(Thr) + L-threonine + ATP = L-threonyl-tRNA(Thr) + AMP + diphosphate + H(+). Functionally, catalyzes the attachment of threonine to tRNA(Thr) in a two-step reaction: L-threonine is first activated by ATP to form Thr-AMP and then transferred to the acceptor end of tRNA(Thr). Also edits incorrectly charged L-seryl-tRNA(Thr). The sequence is that of Threonine--tRNA ligase from Streptococcus agalactiae serotype III (strain NEM316).